Reading from the N-terminus, the 511-residue chain is Exodeoxyribonuclease 7 large subunit (511 aa).

It belongs to the XseA family. In terms of assembly, heterooligomer composed of large and small subunits.

Its subcellular location is the cytoplasm. The enzyme catalyses Exonucleolytic cleavage in either 5'- to 3'- or 3'- to 5'-direction to yield nucleoside 5'-phosphates.. Bidirectionally degrades single-stranded DNA into large acid-insoluble oligonucleotides, which are then degraded further into small acid-soluble oligonucleotides. This chain is Exodeoxyribonuclease 7 large subunit, found in Brucella canis (strain ATCC 23365 / NCTC 10854 / RM-666).